The following is a 393-amino-acid chain: Putative amino-acid ABC transporter permease protein YhdX (393 aa).

Transmembrane regions (helical) follow at residues 21-41, 92-112, 128-148, 180-200, 219-239, 256-276, 333-353, and 363-383; these read AWLF…WLFH, LLVS…IGLA, IEIF…FAVL, DGFI…VGLF, IAAV…GAAL, VLIP…SAFI, SSLA…GTVL, and IAMT…LMNI. The ABC transmembrane type-1 domain maps to 88 to 381; sequence LLNTLLVSAL…IISLTISLLM (294 aa).

Belongs to the binding-protein-dependent transport system permease family. HisMQ subfamily.

The protein resides in the cell inner membrane. Its function is as follows. Probably part of the binding-protein-dependent transport system YdhWXYZ for an amino acid; probably responsible for the translocation of the substrate across the membrane. This is Putative amino-acid ABC transporter permease protein YhdX (yhdX) from Escherichia coli (strain K12).